A 305-amino-acid polypeptide reads, in one-letter code: Membrane glycoprotein UL142 (305 aa).

The signal sequence occupies residues 1 to 19 (MRIEWACWLFGYFVSSVGS). The Lumenal portion of the chain corresponds to 20 to 270 (ERSLSYRYHL…QKTNNTTSPW (251 aa)). A helical transmembrane segment spans residues 271-288 (VYAIPMGATATIGAGLYI). Topologically, residues 289 to 305 (GKHFTPVKFVYEVWRGQ) are cytoplasmic.

In terms of assembly, interacts with host MICA and ULBP3.

The protein localises to the host endoplasmic reticulum membrane. Its subcellular location is the host Golgi apparatus membrane. Participates in the inhibition of the host immune response. Prevents host NK cell-mediated lysis of the infected cell by preventing the KLRK1 ligand 3/ULBP3 trafficking to the cell surface. Also retains another KLRK1 ligand, MHC class I-related chain A/MICA, in the Golgi apparatus to avoid its surface expression. The polypeptide is Membrane glycoprotein UL142 (UL142) (Homo sapiens (Human)).